Reading from the N-terminus, the 37-residue chain is Dolichyl-diphosphooligosaccharide--protein glycosyltransferase subunit 4A (37 aa).

Residues 1–7 (MIDDQDL) are Lumenal-facing. The helical transmembrane segment at 8–28 (GFIANFLGIFIFALVIAYHYV) threads the bilayer. Over 29–37 (TADPKYEAT) the chain is Cytoplasmic.

The protein belongs to the OST4 family. As to quaternary structure, component of the oligosaccharyltransferase (OST) complex.

It is found in the endoplasmic reticulum membrane. Functionally, subunit of the oligosaccharyl transferase (OST) complex that catalyzes the initial transfer of a defined glycan (Glc(3)Man(9)GlcNAc(2) in eukaryotes) from the lipid carrier dolichol-pyrophosphate to an asparagine residue within an Asn-X-Ser/Thr consensus motif in nascent polypeptide chains, the first step in protein N-glycosylation. N-glycosylation occurs cotranslationally and the complex associates with the Sec61 complex at the channel-forming translocon complex that mediates protein translocation across the endoplasmic reticulum (ER). All subunits are required for a maximal enzyme activity. The protein is Dolichyl-diphosphooligosaccharide--protein glycosyltransferase subunit 4A (OST4A) of Arabidopsis thaliana (Mouse-ear cress).